The sequence spans 448 residues: Binary larvicide subunit BinB (448 aa).

Residues 1 to 198 (MCDSKDNSGV…TAFVNSSFYA (198 aa)) form a beta-trefoil domain region. Cys67 and Cys161 are oxidised to a cystine. Positions 199–448 (AAIPQLPQTS…NEELIPKINQ (250 aa)) are probable pore-forming domain.

This sequence belongs to the toxin_10 family. Forms a heterodimer with BinA. Upon toxin crystal solubilization with NaOH at pH 12, only the 63-kDa (binB) and 43-kDa (binA) proteins were detected. Interacts with mosquito protein Cpm1 which acts as its host receptor. Processed by proteases extracted from C.pipiens larval gut; unlike its partner BinA, it does not form a stable digestion product.

The protein resides in the spore. Its subcellular location is the perispore. Its function is as follows. Component of a binary toxin active against Culex and some Aedes mosquito larvae. This subunit alone has no toxic larvicidal activity. This subunit is responsible for localized binding to specific regions of the host larval gut. Binary toxin internalization into host gut cells requires both proteins. This is Binary larvicide subunit BinB (binB) from Lysinibacillus sphaericus (Bacillus sphaericus).